The chain runs to 299 residues: Probable lipid kinase YegS-like (299 aa).

The DAGKc domain maps to 2 to 133 (ATFPASLLIL…IDIAQVNDKT (132 aa)). Residues threonine 40, 66-72 (GDGTINE), and threonine 95 contribute to the ATP site. Residues leucine 215, aspartate 218, and leucine 220 each contribute to the Mg(2+) site. Glutamate 271 acts as the Proton acceptor in catalysis.

The protein belongs to the diacylglycerol/lipid kinase family. YegS lipid kinase subfamily. The cofactor is Mg(2+). It depends on Ca(2+) as a cofactor.

Its subcellular location is the cytoplasm. Functionally, probably phosphorylates lipids; the in vivo substrate is unknown. The chain is Probable lipid kinase YegS-like from Citrobacter koseri (strain ATCC BAA-895 / CDC 4225-83 / SGSC4696).